We begin with the raw amino-acid sequence, 49 residues long: Sperm protamine P1 (49 aa).

The tract at residues 1–49 (MARYRCCRSHSRSRCRRRRRRSRRRRRRSCGRRRRAGYRRYTVRYRRRR) is disordered.

It belongs to the protamine P1 family. In terms of tissue distribution, testis.

It localises to the nucleus. The protein localises to the chromosome. Functionally, protamines substitute for histones in the chromatin of sperm during the haploid phase of spermatogenesis. They compact sperm DNA into a highly condensed, stable and inactive complex. This chain is Sperm protamine P1 (PRM1), found in Macronycteris commersonii (Commerson's roundleaf bat).